We begin with the raw amino-acid sequence, 46 residues long: Photosystem II reaction center protein K (46 aa).

A propeptide spanning residues 1 to 9 (MSTLPILLA) is cleaved from the precursor. The chain crosses the membrane as a helical span at residues 25-45 (LPSIPVLFLLLAFVWQAAVSF).

Belongs to the PsbK family. In terms of assembly, PSII is composed of 1 copy each of membrane proteins PsbA, PsbB, PsbC, PsbD, PsbE, PsbF, PsbH, PsbI, PsbJ, PsbK, PsbL, PsbM, PsbT, PsbX, PsbY, PsbZ, Psb30/Ycf12, at least 3 peripheral proteins of the oxygen-evolving complex and a large number of cofactors. It forms dimeric complexes.

Its subcellular location is the plastid. The protein resides in the chloroplast thylakoid membrane. Functionally, one of the components of the core complex of photosystem II (PSII). PSII is a light-driven water:plastoquinone oxidoreductase that uses light energy to abstract electrons from H(2)O, generating O(2) and a proton gradient subsequently used for ATP formation. It consists of a core antenna complex that captures photons, and an electron transfer chain that converts photonic excitation into a charge separation. The chain is Photosystem II reaction center protein K from Nephroselmis olivacea (Green alga).